The following is a 330-amino-acid chain: Putative UV-damage endonuclease (330 aa).

Belongs to the uve1/UvsE family.

It is found in the virion. Endonuclease for the repair of UV-irradiated DNA. In Acanthamoeba polyphaga mimivirus (APMV), this protein is Putative UV-damage endonuclease.